A 178-amino-acid polypeptide reads, in one-letter code: Nicotinamide-nucleotide adenylyltransferase (178 aa).

This sequence belongs to the archaeal NMN adenylyltransferase family.

Its subcellular location is the cytoplasm. The enzyme catalyses beta-nicotinamide D-ribonucleotide + ATP + H(+) = diphosphate + NAD(+). Its pathway is cofactor biosynthesis; NAD(+) biosynthesis; NAD(+) from nicotinamide D-ribonucleotide: step 1/1. The polypeptide is Nicotinamide-nucleotide adenylyltransferase (Pyrobaculum aerophilum (strain ATCC 51768 / DSM 7523 / JCM 9630 / CIP 104966 / NBRC 100827 / IM2)).